A 166-amino-acid polypeptide reads, in one-letter code: Ribosome maturation factor RimP (166 aa).

The protein belongs to the RimP family.

It localises to the cytoplasm. Required for maturation of 30S ribosomal subunits. The polypeptide is Ribosome maturation factor RimP (Psychrobacter sp. (strain PRwf-1)).